The following is a 129-amino-acid chain: Phosphoribosyl-AMP cyclohydrolase (129 aa).

D87 contributes to the Mg(2+) binding site. C88 lines the Zn(2+) pocket. Mg(2+) contacts are provided by D89 and D91. Zn(2+) contacts are provided by C104 and C111.

Belongs to the PRA-CH family. Homodimer. The cofactor is Mg(2+). Zn(2+) is required as a cofactor.

The protein localises to the cytoplasm. It carries out the reaction 1-(5-phospho-beta-D-ribosyl)-5'-AMP + H2O = 1-(5-phospho-beta-D-ribosyl)-5-[(5-phospho-beta-D-ribosylamino)methylideneamino]imidazole-4-carboxamide. The protein operates within amino-acid biosynthesis; L-histidine biosynthesis; L-histidine from 5-phospho-alpha-D-ribose 1-diphosphate: step 3/9. Catalyzes the hydrolysis of the adenine ring of phosphoribosyl-AMP. This Ruegeria sp. (strain TM1040) (Silicibacter sp.) protein is Phosphoribosyl-AMP cyclohydrolase.